Reading from the N-terminus, the 151-residue chain is Large ribosomal subunit protein uL13 (151 aa).

The protein belongs to the universal ribosomal protein uL13 family. As to quaternary structure, part of the 50S ribosomal subunit.

Functionally, this protein is one of the early assembly proteins of the 50S ribosomal subunit, although it is not seen to bind rRNA by itself. It is important during the early stages of 50S assembly. The sequence is that of Large ribosomal subunit protein uL13 from Synechococcus sp. (strain JA-3-3Ab) (Cyanobacteria bacterium Yellowstone A-Prime).